We begin with the raw amino-acid sequence, 485 residues long: Glycogen synthase (485 aa).

Residue lysine 20 participates in ADP-alpha-D-glucose binding.

This sequence belongs to the glycosyltransferase 1 family. Bacterial/plant glycogen synthase subfamily.

It carries out the reaction [(1-&gt;4)-alpha-D-glucosyl](n) + ADP-alpha-D-glucose = [(1-&gt;4)-alpha-D-glucosyl](n+1) + ADP + H(+). The protein operates within glycan biosynthesis; glycogen biosynthesis. Synthesizes alpha-1,4-glucan chains using ADP-glucose. The chain is Glycogen synthase from Vibrio vulnificus (strain CMCP6).